A 237-amino-acid polypeptide reads, in one-letter code: Protein YIPF4 (237 aa).

Topologically, residues 1 to 106 (MQFSPTNGDF…FNRQVVRDNP (106 aa)) are cytoplasmic. Residues 107–127 (DFWGPLAVVLLFSMISIYGQF) form a helical membrane-spanning segment. At 128-131 (RVVS) the chain is on the lumenal side. A helical membrane pass occupies residues 132–152 (WIITIWIFGSLTIFLLARVLG). Topologically, residues 153–160 (GEVSYGQV) are cytoplasmic. Residues 161–181 (LGVIGYSLLPLIVIAPLLLVI) form a helical membrane-spanning segment. Residues 182 to 188 (GGFEVVS) are Lumenal-facing. A helical membrane pass occupies residues 189–209 (TLIKLFGVFWAAYSAASLLVG). Residues 210 to 216 (DEFKTKK) lie on the Cytoplasmic side of the membrane. Residues 217–237 (PLLIYPIFLLYIYFLSLYTGV) form a helical membrane-spanning segment.

The protein belongs to the YIP1 family.

It is found in the golgi apparatus. It localises to the cis-Golgi network membrane. In terms of biological role, involved in the maintenance of the Golgi structure. The sequence is that of Protein YIPF4 (yipf4) from Danio rerio (Zebrafish).